Here is a 193-residue protein sequence, read N- to C-terminus: dCTP deaminase (193 aa).

Residues 110–115, Asp128, 136–138, Tyr171, Lys178, and Gln182 each bind dCTP; these read RSSLAR and VLE. Residue Glu138 is the Proton donor/acceptor of the active site. Residues 169–193 are disordered; it reads RPYNRRQDAKYRDQQGAVASRIDKD.

It belongs to the dCTP deaminase family. Homotrimer.

It carries out the reaction dCTP + H2O + H(+) = dUTP + NH4(+). Its pathway is pyrimidine metabolism; dUMP biosynthesis; dUMP from dCTP (dUTP route): step 1/2. Functionally, catalyzes the deamination of dCTP to dUTP. In Salmonella paratyphi B (strain ATCC BAA-1250 / SPB7), this protein is dCTP deaminase.